The primary structure comprises 314 residues: tRNA-cytidine(32) 2-sulfurtransferase (314 aa).

A PP-loop motif motif is present at residues 49–54 (SGGKDS). Residues cysteine 124, cysteine 127, and cysteine 215 each coordinate [4Fe-4S] cluster.

Belongs to the TtcA family. In terms of assembly, homodimer. Mg(2+) serves as cofactor. The cofactor is [4Fe-4S] cluster.

Its subcellular location is the cytoplasm. The enzyme catalyses cytidine(32) in tRNA + S-sulfanyl-L-cysteinyl-[cysteine desulfurase] + AH2 + ATP = 2-thiocytidine(32) in tRNA + L-cysteinyl-[cysteine desulfurase] + A + AMP + diphosphate + H(+). Its pathway is tRNA modification. Catalyzes the ATP-dependent 2-thiolation of cytidine in position 32 of tRNA, to form 2-thiocytidine (s(2)C32). The sulfur atoms are provided by the cysteine/cysteine desulfurase (IscS) system. The sequence is that of tRNA-cytidine(32) 2-sulfurtransferase from Histophilus somni (strain 2336) (Haemophilus somnus).